Reading from the N-terminus, the 493-residue chain is Probable cytosol aminopeptidase (493 aa).

Lys-262 and Asp-267 together coordinate Mn(2+). Residue Lys-274 is part of the active site. The Mn(2+) site is built by Asp-285, Asp-344, and Glu-346. Arg-348 is a catalytic residue.

This sequence belongs to the peptidase M17 family. The cofactor is Mn(2+).

It is found in the cytoplasm. The catalysed reaction is Release of an N-terminal amino acid, Xaa-|-Yaa-, in which Xaa is preferably Leu, but may be other amino acids including Pro although not Arg or Lys, and Yaa may be Pro. Amino acid amides and methyl esters are also readily hydrolyzed, but rates on arylamides are exceedingly low.. It catalyses the reaction Release of an N-terminal amino acid, preferentially leucine, but not glutamic or aspartic acids.. Its function is as follows. Presumably involved in the processing and regular turnover of intracellular proteins. Catalyzes the removal of unsubstituted N-terminal amino acids from various peptides. In Xanthomonas campestris pv. campestris (strain 8004), this protein is Probable cytosol aminopeptidase.